The sequence spans 431 residues: Putative F-box/FBD/LRR-repeat protein At4g26350 (431 aa).

Positions 1–47 (MDIISQCPDHLLLRILSFIPTKDVIVTSLLSKRWGSLWRWVPKLEYD) constitute an F-box domain. 5 LRR repeats span residues 52-78 (NMRFVKFVYRSLLQNNAPVLESLHLKN), 85-109 (CRTVDIGGWIDIAVSRRVRELEISI), 132-159 (ILTIKHCHLVDVPLAVCLPSLKKLHLRC), 160-185 (IGWAYNATLLRLISGCTNLEELRLAR), and 309-334 (CTQGWWDLLTHMLQGSPKLRFLTLTN). The FBD domain occupies 348-398 (CWKRPSSVPACLLSSLQAFTWSGYKGRQGDKEVVKYVLRNATGLKKRIFIS).

This is Putative F-box/FBD/LRR-repeat protein At4g26350 from Arabidopsis thaliana (Mouse-ear cress).